The chain runs to 160 residues: Ribosomal RNA large subunit methyltransferase H (160 aa).

S-adenosyl-L-methionine is bound by residues Leu-76, Gly-108, and 127 to 132 (LGKMTW).

Belongs to the RNA methyltransferase RlmH family. Homodimer.

The protein localises to the cytoplasm. The catalysed reaction is pseudouridine(1915) in 23S rRNA + S-adenosyl-L-methionine = N(3)-methylpseudouridine(1915) in 23S rRNA + S-adenosyl-L-homocysteine + H(+). Specifically methylates the pseudouridine at position 1915 (m3Psi1915) in 23S rRNA. The sequence is that of Ribosomal RNA large subunit methyltransferase H from Rhizobium rhizogenes (strain K84 / ATCC BAA-868) (Agrobacterium radiobacter).